A 307-amino-acid chain; its full sequence is Nucleotide-binding protein Achl_1824 (307 aa).

Residue glycine 30 to serine 37 coordinates ATP. Aspartate 81–serine 84 is a binding site for GTP.

It belongs to the RapZ-like family.

Functionally, displays ATPase and GTPase activities. This is Nucleotide-binding protein Achl_1824 from Pseudarthrobacter chlorophenolicus (strain ATCC 700700 / DSM 12829 / CIP 107037 / JCM 12360 / KCTC 9906 / NCIMB 13794 / A6) (Arthrobacter chlorophenolicus).